The sequence spans 106 residues: Urease subunit beta (106 aa).

The protein belongs to the urease beta subunit family. In terms of assembly, heterotrimer of UreA (gamma), UreB (beta) and UreC (alpha) subunits. Three heterotrimers associate to form the active enzyme.

It is found in the cytoplasm. It carries out the reaction urea + 2 H2O + H(+) = hydrogencarbonate + 2 NH4(+). It participates in nitrogen metabolism; urea degradation; CO(2) and NH(3) from urea (urease route): step 1/1. This chain is Urease subunit beta, found in Prochlorococcus marinus (strain MIT 9312).